We begin with the raw amino-acid sequence, 573 residues long: MSQSLADIIAALPDGDGWGPAVTTELTLNGVPYAPFSKGDKLGRMADWTDGKDRDGRGGRQQYNRNFRDQQVYGAGTASLFSAPQAEDESTFSVVSNVRDSTKTRFGRGAVFTRGGRGQRGARGTERGGRAQLSRGRGGQYGGGYDRGGRSAAGGRGGRRFGWKDYDKPARNRDASINVKADWSLLEEIDFNRLGKLNLDADEGEDVDSYGFVHYYDRSYDKPAVKSAERKLNPIDRAAYNVTTSLDPVIQELAEKDEATIFATDNILSTLMCAPRSVYPWDIVIVKQGSKVYFDKRDNAALDMVTVNENAVDAPLEASEGSKDSINQPSALAEEATYINHNFVNQVVIENESQKVDMEHENPFYNAAEETEPPASKAYKYRKFDLSTNDEGPVYLVVRTELDAVQKNSNNGEDQFLTVRALNEFDNKAQGSGGALDWRSKLVSQRGAVVATEMKNNSCKLAKWTVQSILAKADVLKLGFVSRANPKSNDKHVILGVIGWKPKDFANQMNLHLSNGWGIVRTIADMCLKREDGKYVLVKDPNKTILRLYEVPAGGLDEEEDNGDLGQEEDDEE.

The interval 111–162 (VFTRGGRGQRGARGTERGGRAQLSRGRGGQYGGGYDRGGRSAAGGRGGRRFG) is disordered. Over residues 136 to 156 (GRGGQYGGGYDRGGRSAAGGR) the composition is skewed to gly residues. Positions 301 to 315 (ALDMVTVNENAVDAP) are RNA gate. The segment at 552–573 (PAGGLDEEEDNGDLGQEEDDEE) is disordered. A compositionally biased stretch (acidic residues) spans 556 to 573 (LDEEEDNGDLGQEEDDEE).

This sequence belongs to the eIF-3 subunit D family. As to quaternary structure, component of the eukaryotic translation initiation factor 3 (eIF-3) complex.

It localises to the cytoplasm. Functionally, mRNA cap-binding component of the eukaryotic translation initiation factor 3 (eIF-3) complex, which is involved in protein synthesis of a specialized repertoire of mRNAs and, together with other initiation factors, stimulates binding of mRNA and methionyl-tRNAi to the 40S ribosome. The eIF-3 complex specifically targets and initiates translation of a subset of mRNAs involved in cell proliferation. In the eIF-3 complex, eif3d specifically recognizes and binds the 7-methylguanosine cap of a subset of mRNAs. The chain is Eukaryotic translation initiation factor 3 subunit D from Pyricularia oryzae (strain 70-15 / ATCC MYA-4617 / FGSC 8958) (Rice blast fungus).